Here is a 70-residue protein sequence, read N- to C-terminus: Large ribosomal subunit protein uL29 (70 aa).

It belongs to the universal ribosomal protein uL29 family.

This is Large ribosomal subunit protein uL29 from Prochlorococcus marinus (strain MIT 9211).